A 110-amino-acid polypeptide reads, in one-letter code: uncharacterized protein (110 aa).

Functionally, may play a regulatory role in sulfomenaquinone (SMK) biosynthesis. This is an uncharacterized protein from Mycobacterium bovis (strain ATCC BAA-935 / AF2122/97).